We begin with the raw amino-acid sequence, 186 residues long: Small ribosomal subunit protein uS7 (186 aa).

It belongs to the universal ribosomal protein uS7 family. In terms of assembly, part of the 30S ribosomal subunit.

One of the primary rRNA binding proteins, it binds directly to 16S rRNA where it nucleates assembly of the head domain of the 30S subunit. Is located at the subunit interface close to the decoding center. This is Small ribosomal subunit protein uS7 from Methanococcoides burtonii (strain DSM 6242 / NBRC 107633 / OCM 468 / ACE-M).